Here is a 269-residue protein sequence, read N- to C-terminus: Cytochrome c oxidase subunit 3 (269 aa).

7 helical membrane-spanning segments follow: residues 21–41, 49–69, 90–110, 132–152, 167–187, 205–225, and 247–267; these read PWPM…GLTA, MFML…FKDI, GFLM…WAFL, ISAA…GVTM, TLYG…FQGL, FFAL…MLAM, and ILYL…VYWW.

The protein belongs to the cytochrome c oxidase subunit 3 family. Component of the cytochrome c oxidase (complex IV, CIV), a multisubunit enzyme composed of a catalytic core of 3 subunits and several supernumerary subunits. The complex exists as a monomer or a dimer and forms supercomplexes (SCs) in the inner mitochondrial membrane with ubiquinol-cytochrome c oxidoreductase (cytochrome b-c1 complex, complex III, CIII).

Its subcellular location is the mitochondrion inner membrane. The enzyme catalyses 4 Fe(II)-[cytochrome c] + O2 + 8 H(+)(in) = 4 Fe(III)-[cytochrome c] + 2 H2O + 4 H(+)(out). In terms of biological role, component of the cytochrome c oxidase, the last enzyme in the mitochondrial electron transport chain which drives oxidative phosphorylation. The respiratory chain contains 3 multisubunit complexes succinate dehydrogenase (complex II, CII), ubiquinol-cytochrome c oxidoreductase (cytochrome b-c1 complex, complex III, CIII) and cytochrome c oxidase (complex IV, CIV), that cooperate to transfer electrons derived from NADH and succinate to molecular oxygen, creating an electrochemical gradient over the inner membrane that drives transmembrane transport and the ATP synthase. Cytochrome c oxidase is the component of the respiratory chain that catalyzes the reduction of oxygen to water. Electrons originating from reduced cytochrome c in the intermembrane space (IMS) are transferred via the dinuclear copper A center (CU(A)) of subunit 2 and heme A of subunit 1 to the active site in subunit 1, a binuclear center (BNC) formed by heme A3 and copper B (CU(B)). The BNC reduces molecular oxygen to 2 water molecules using 4 electrons from cytochrome c in the IMS and 4 protons from the mitochondrial matrix. The sequence is that of Cytochrome c oxidase subunit 3 (COX3) from Debaryomyces hansenii (strain ATCC 36239 / CBS 767 / BCRC 21394 / JCM 1990 / NBRC 0083 / IGC 2968) (Yeast).